Here is a 163-residue protein sequence, read N- to C-terminus: SsrA-binding protein (163 aa).

The segment covering 140–157 has biased composition (basic and acidic residues); it reads RRGAIAERESKREMDRAL. Residues 140-163 form a disordered region; the sequence is RRGAIAERESKREMDRALARGRRR.

Belongs to the SmpB family.

The protein resides in the cytoplasm. In terms of biological role, required for rescue of stalled ribosomes mediated by trans-translation. Binds to transfer-messenger RNA (tmRNA), required for stable association of tmRNA with ribosomes. tmRNA and SmpB together mimic tRNA shape, replacing the anticodon stem-loop with SmpB. tmRNA is encoded by the ssrA gene; the 2 termini fold to resemble tRNA(Ala) and it encodes a 'tag peptide', a short internal open reading frame. During trans-translation Ala-aminoacylated tmRNA acts like a tRNA, entering the A-site of stalled ribosomes, displacing the stalled mRNA. The ribosome then switches to translate the ORF on the tmRNA; the nascent peptide is terminated with the 'tag peptide' encoded by the tmRNA and targeted for degradation. The ribosome is freed to recommence translation, which seems to be the essential function of trans-translation. The chain is SsrA-binding protein from Anaeromyxobacter dehalogenans (strain 2CP-C).